The primary structure comprises 123 residues: uncharacterized protein (123 aa).

This is an uncharacterized protein from Aquifex aeolicus (strain VF5).